The following is a 158-amino-acid chain: Small ribosomal subunit protein uS7 (158 aa).

It belongs to the universal ribosomal protein uS7 family. In terms of assembly, part of the 30S ribosomal subunit. Contacts proteins S9 and S11.

Functionally, one of the primary rRNA binding proteins, it binds directly to 16S rRNA where it nucleates assembly of the head domain of the 30S subunit. Is located at the subunit interface close to the decoding center, probably blocks exit of the E-site tRNA. This is Small ribosomal subunit protein uS7 from Bacteroides fragilis (strain YCH46).